Consider the following 457-residue polypeptide: Zinc finger protein ZIPIC (457 aa).

The ZAD domain maps to 3-84; the sequence is CCICQFSVRV…ILELIHSPYM (82 aa). 6 C2H2-type zinc fingers span residues 257–280, 284–306, 312–334, 340–362, 369–391, and 397–419; these read IQCP…KREH, YVCD…LQNH, FACP…MAWH, YQCD…KMIH, LECQ…MRSH, and FACP…LREH. Residues 430–448 form a C2H2-type 7; degenerate zinc finger; the sequence is FHCSKCTHTFINEQNYDAH.

In terms of assembly, interacts (via region between the ZAD domain and the first zinc finger domain) with Cp190 (via centrosomal targeting M domain); the interaction is direct. Interacts with pita.

The protein resides in the nucleus. It localises to the chromosome. Functionally, insulator DNA-binding protein. Recruits Cp190 and cooperatively binds to chromatin promoter regions to exert transcriptional regulator and chromatin insulator functions. Chromatin insulators are regulatory elements that establish independent domains of transcriptional activity within eukaryotic genomes. Insulators are proposed to structure the chromatin fiber into independent domains of differing transcriptional potential by promoting the formation of distinct chromatin loops to form topologically associating domains (TADs). Chromatin binding sites often cluster with those of other insulator DNA-binding proteins such as pita, CTCF and BEAF-32, but not Su(Hw). The protein is Zinc finger protein ZIPIC of Drosophila melanogaster (Fruit fly).